Here is an 886-residue protein sequence, read N- to C-terminus: Isoleucine--tRNA ligase (886 aa).

Positions 60–70 match the 'HIGH' region motif; that stretch reads PYANGDIHIGH. Residue E546 participates in L-isoleucyl-5'-AMP binding. The short motif at 587–591 is the 'KMSKS' region element; the sequence is KMSKS. K590 contacts ATP. Zn(2+)-binding residues include C856, C859, C870, and C873.

Belongs to the class-I aminoacyl-tRNA synthetase family. IleS type 1 subfamily. Monomer. Zn(2+) is required as a cofactor.

Its subcellular location is the cytoplasm. It carries out the reaction tRNA(Ile) + L-isoleucine + ATP = L-isoleucyl-tRNA(Ile) + AMP + diphosphate. Its function is as follows. Catalyzes the attachment of isoleucine to tRNA(Ile). As IleRS can inadvertently accommodate and process structurally similar amino acids such as valine, to avoid such errors it has two additional distinct tRNA(Ile)-dependent editing activities. One activity is designated as 'pretransfer' editing and involves the hydrolysis of activated Val-AMP. The other activity is designated 'posttransfer' editing and involves deacylation of mischarged Val-tRNA(Ile). This is Isoleucine--tRNA ligase from Mesomycoplasma hyopneumoniae (strain J / ATCC 25934 / NCTC 10110) (Mycoplasma hyopneumoniae).